A 117-amino-acid chain; its full sequence is Transcription elongation factor A protein-like 8 (117 aa).

Positions 1 to 81 (MQKSCDENEG…PEEVIRGVDE (81 aa)) are disordered. Over residues 41 to 81 (NVREETDGSLRGEPAEPSPEPKEDTPARHLNPEEVIRGVDE) the composition is skewed to basic and acidic residues. Residues 73–100 (EEVIRGVDELERLREEIRRVRNKFVLMH) are a coiled coil.

It belongs to the TFS-II family. TFA subfamily. In terms of tissue distribution, highly expressed in kidney. Moderately expressed in heart and lung. Low expression in brain and liver. Expression is up-regulated in nephrectomized kidney.

It is found in the nucleus. In terms of biological role, may be involved in transcriptional regulation. The polypeptide is Transcription elongation factor A protein-like 8 (Tceal8) (Rattus norvegicus (Rat)).